The primary structure comprises 408 residues: Probable medium-chain specific acyl-CoA dehydrogenase 2, mitochondrial (408 aa).

The N-terminal 5 residues, 1–5, are a transit peptide targeting the mitochondrion; it reads MLSRL. FAD is bound by residues 143 to 152 and 176 to 178; these read YCVTEPGAGS and WIT. S152 is a binding site for substrate. 263-266 contacts substrate; that stretch reads DMTR. FAD-binding positions include 291–293, 301–302, and 355–359; these read RKA, HQ, and MLFRC. The active-site Proton acceptor is E382. G383 contributes to the substrate binding site. 384 to 386 is an FAD binding site; that stretch reads TSQ. R394 contributes to the substrate binding site.

It belongs to the acyl-CoA dehydrogenase family. In terms of assembly, homotetramer. FAD is required as a cofactor.

The protein resides in the mitochondrion matrix. It catalyses the reaction a medium-chain 2,3-saturated fatty acyl-CoA + oxidized [electron-transfer flavoprotein] + H(+) = a medium-chain (2E)-enoyl-CoA + reduced [electron-transfer flavoprotein]. It participates in lipid metabolism; mitochondrial fatty acid beta-oxidation. In terms of biological role, this enzyme is specific for acyl chain lengths of 4 to 16. This is Probable medium-chain specific acyl-CoA dehydrogenase 2, mitochondrial from Caenorhabditis briggsae.